The following is a 901-amino-acid chain: HTH-type transcriptional regulator MalT (901 aa).

39–46 (SPAGYGKT) lines the ATP pocket. The region spanning 829 to 894 (ELIRTSPLTQ…DAVQHAQQLL (66 aa)) is the HTH luxR-type domain. A DNA-binding region (H-T-H motif) is located at residues 853–872 (NEQIAGELAVAATTIKTHIR).

Belongs to the MalT family. As to quaternary structure, monomer in solution. Oligomerizes to an active state in the presence of the positive effectors ATP and maltotriose.

Its activity is regulated as follows. Activated by ATP and maltotriose, which are both required for DNA binding. In terms of biological role, positively regulates the transcription of the maltose regulon whose gene products are responsible for uptake and catabolism of malto-oligosaccharides. Specifically binds to the promoter region of its target genes, recognizing a short DNA motif called the MalT box. The protein is HTH-type transcriptional regulator MalT of Salmonella gallinarum (strain 287/91 / NCTC 13346).